A 543-amino-acid polypeptide reads, in one-letter code: Hydroxylamine reductase (543 aa).

The [4Fe-4S] cluster site is built by Cys5, Cys8, Cys17, and Cys23. The hybrid [4Fe-2O-2S] cluster site is built by His250, Glu274, Cys318, Cys410, Cys438, Cys463, Glu498, and Lys500. At Cys410 the chain carries Cysteine persulfide.

This sequence belongs to the HCP family. The cofactor is [4Fe-4S] cluster. It depends on hybrid [4Fe-2O-2S] cluster as a cofactor.

Its subcellular location is the cytoplasm. The catalysed reaction is A + NH4(+) + H2O = hydroxylamine + AH2 + H(+). In terms of biological role, catalyzes the reduction of hydroxylamine to form NH(3) and H(2)O. The polypeptide is Hydroxylamine reductase (Petrotoga mobilis (strain DSM 10674 / SJ95)).